A 164-amino-acid polypeptide reads, in one-letter code: MQQPKRNFDLYKLITDKQIDFQVADLIQDEQSSFVSVRIYGQFKCFVPKSTIQEQLDKIKNLSSKELAKNKIFKFLSEYNKNNQKQDELSHDYYGYFKVQQHQFILNLENAQREASLAVDDFYFINGRIYKTNHDILILQAHHVYQMQKPTLQLLQAASEINQN.

Component of the telomerase holoenzyme complex, composed of the catalytic core (the catalytic subunit TERT, the telomerase RNA template component TER and TAP65/p65), which is associated with two heterotrimeric subcomplexes: (i) the replication protein A (RPA)-related subcomplex, composed of TEB1, RPA2/TEB2 and RPA3/TEB3 and (ii) the CST-like subcomplex, composed of TAP75/p75, TAP45/p45 and TAP19/p19. TEB1 and the CST-like subcomplex are tethered to the catalytic core by TAP50/p50.

The protein resides in the chromosome. It localises to the telomere. In terms of biological role, component of a CST-like subcomplex of the holoenzyme telomerase ribonucleoprotein complex, which stimulates telomerase complementary-strand synthesis. Telomerase is an essential ribonucleoprotein enzyme that copies new telomeric repeats onto chromosome ends by repetitively synthesizing the short telomere-repeat sequence 5'-TTGGGG-3' using an RNA template component TER. The CST-like subcomplex (also named 7-4-1) binds telomeric single-stranded DNA and coordinates telomere G-strand and C-strand synthesis. The protein is Telomerase-associated protein of 19 kDa of Tetrahymena thermophila (strain SB210).